The sequence spans 445 residues: DNA repair protein RadA (445 aa).

The segment at 10–27 (CSNCANISNKWSGQCFDC) adopts a C4-type zinc-finger fold. 90–97 (GEPGIGKS) contributes to the ATP binding site. The RadA KNRFG motif signature appears at 249 to 253 (KNRFG). The segment at 348–445 (EIYLSIAGGL…HLQELKEIIK (98 aa)) is lon-protease-like.

It belongs to the RecA family. RadA subfamily.

Its function is as follows. DNA-dependent ATPase involved in processing of recombination intermediates, plays a role in repairing DNA breaks. Stimulates the branch migration of RecA-mediated strand transfer reactions, allowing the 3' invading strand to extend heteroduplex DNA faster. Binds ssDNA in the presence of ADP but not other nucleotides, has ATPase activity that is stimulated by ssDNA and various branched DNA structures, but inhibited by SSB. Does not have RecA's homology-searching function. This chain is DNA repair protein RadA, found in Rickettsia prowazekii (strain Madrid E).